The sequence spans 208 residues: N-hydroxyputrescine acetyltransferase (208 aa).

It belongs to the IucB family.

The enzyme catalyses N-hydroxyputrescine + acetyl-CoA = N(1)-acetyl-N(1)-hydroxyputrescine + CoA. It participates in siderophore biosynthesis. Its function is as follows. N-acetyltransferase involved in the biosynthesis of fimsbactin A, the major siderophore produced by A.baumannii. Catalyzes the acetylation of N-hydroxyputrescine to form N(1)-acetyl-N(1)-hydroxyputrescine (ahPutr). The protein is N-hydroxyputrescine acetyltransferase of Acinetobacter baumannii (strain ATCC 17978 / DSM 105126 / CIP 53.77 / LMG 1025 / NCDC KC755 / 5377).